Consider the following 365-residue polypeptide: Peptidylglycine alpha-hydroxylating monooxygenase (365 aa).

The N-terminal stretch at 1–24 is a signal peptide; that stretch reads MPRISEIAASVGLLLLIGVISVDG. 2 cysteine pairs are disulfide-bonded: Cys-69–Cys-114 and Cys-102–Cys-129. Asn-88 is a glycosylation site (N-linked (GlcNAc...) asparagine). Residues His-95 and His-96 each coordinate Cu cation. Cu cation is bound by residues His-172, His-241, and His-243. An N-linked (GlcNAc...) asparagine glycan is attached at Asn-280. Cys-297 and Cys-318 are oxidised to a cystine. Residue Met-317 participates in Cu cation binding.

The protein belongs to the copper type II ascorbate-dependent monooxygenase family. Cu(2+) serves as cofactor. Expressed in the central nervous system (CNS) in a small number of CNS neurons (approximately a few hundred). Expression is present both in cell bodies and within neuropil regions. It is strongly expressed in neuroendocrine neurons (at protein level).

The protein localises to the secreted. The catalysed reaction is a [peptide]-C-terminal glycine + 2 L-ascorbate + O2 = a [peptide]-C-terminal (2S)-2-hydroxyglycine + 2 monodehydro-L-ascorbate radical + H2O. Functionally, monooxygenase that catalyzes an essential reaction in C-terminal alpha-amidation of peptides. Produces an unstable peptidyl(2-hydroxyglycine) intermediate. C-terminal amidation of peptides is required for normal developmental transitions and for biosynthesis of secretory peptides throughout the life. This chain is Peptidylglycine alpha-hydroxylating monooxygenase (Phm), found in Drosophila melanogaster (Fruit fly).